We begin with the raw amino-acid sequence, 357 residues long: UPF0283 membrane protein BMEA_A1074 (357 aa).

Positions 1–36 (MSDKTPRKPTAFRLEQPARVSAASEQEEPRRPRAVK) are disordered. Over residues 27 to 36 (EEPRRPRAVK) the composition is skewed to basic and acidic residues. Helical transmembrane passes span 78–98 (ILFG…TEDL) and 109–129 (LGWT…AIIL).

Belongs to the UPF0283 family.

It is found in the cell inner membrane. This is UPF0283 membrane protein BMEA_A1074 from Brucella melitensis biotype 2 (strain ATCC 23457).